A 343-amino-acid polypeptide reads, in one-letter code: Signal peptide peptidase 2 (343 aa).

Over 1-19 (MKTHERAANLALAGLSLAP) the chain is Lumenal. Residues 20–40 (LVVKVNPNANVILTACLAVYV) form a helical membrane-spanning segment. Residues 41–62 (GCYRSVKPTPPAETMSKEHAMR) are Cytoplasmic-facing. The chain crosses the membrane as a helical span at residues 63–83 (FPLVGSAMLLSLFLLFKFLSK). Residues 84–89 (DLVNTV) are Lumenal-facing. The chain crosses the membrane as a helical span at residues 90 to 110 (LTAYFFILGIAALCATLLPSI). Topologically, residues 111-141 (KRFLPKEWNDNAIVWRAPLFHSLSVEFTRSQ) are cytoplasmic. The helical transmembrane segment at 142 to 162 (VVASIPGFFFCIWYAAKKHWL) threads the bilayer. The Lumenal portion of the chain corresponds to 163–165 (ANN). A helical transmembrane segment spans residues 166 to 186 (VLGISFCIQGIEMLSLGSFKT). Over 187–188 (GA) the chain is Cytoplasmic. The chain crosses the membrane as a helical span at residues 189-209 (ILLSGLFFYDIFWVFFTPVMV). D198 is a catalytic residue. At 210 to 230 (SVAKSFDAPIKLLFPTGDAAR) the chain is on the lumenal side. The helical transmembrane segment at 231-251 (PFSMLGLGDIVIPGIFVALAL) threads the bilayer. The active site involves D239. Topologically, residues 252–266 (RFDVSRGIKNRYFNS) are cytoplasmic. A helical transmembrane segment spans residues 267–287 (AFLGYTVGLTVTIIVMNWFQA). The Lumenal segment spans residues 288–290 (AQP). The PAL motif lies at 290–292 (PAL). Residues 291–311 (ALLYIVPGVIGFVAVHCLWNG) form a helical membrane-spanning segment. Over 312–343 (EVKPLLEYNESKAEEEEACEEDTDSKQNKKKE) the chain is Cytoplasmic. The segment covering 324–334 (AEEEEACEEDT) has biased composition (acidic residues). The interval 324–343 (AEEEEACEEDTDSKQNKKKE) is disordered. Positions 340–343 (KKKE) match the Endoplasmic reticulum targeting signal motif.

This sequence belongs to the peptidase A22B family. Ubiquitous.

The protein resides in the endoplasmic reticulum membrane. Its function is as follows. Intramembrane-cleaving aspartic protease (I-CLiP) that cleaves type II membrane signal peptides in the hydrophobic plane of the membrane. Catalyzes intramembrane proteolysis of some signal peptides after they have been cleaved from a preprotein, resulting in the release of the fragment from the ER membrane into the cytoplasm. The protein is Signal peptide peptidase 2 (SPP2) of Oryza sativa subsp. japonica (Rice).